We begin with the raw amino-acid sequence, 208 residues long: Type 3 secretion system stator protein (208 aa).

This sequence belongs to the SctL stator family. As to quaternary structure, the core secretion machinery of the T3SS is composed of approximately 20 different proteins, including cytoplasmic components, a base, an export apparatus and a needle. This subunit is part of the cytosolic complex.

The protein localises to the cytoplasm. Its function is as follows. Component of the type III secretion system (T3SS), also called injectisome, which is used to inject bacterial effector proteins into eukaryotic host cells. Acts as a regulator of the HrcN/SctN ATPase activity. The protein is Type 3 secretion system stator protein of Sinorhizobium fredii (strain NBRC 101917 / NGR234).